A 400-amino-acid chain; its full sequence is Serine/threonine transporter SstT (400 aa).

9 helical membrane-spanning segments follow: residues 14-34 (IIIA…VTPY), 48-68 (SVAP…FQVG), 76-96 (VLLL…IASL), 136-156 (AISE…GLAM), 177-197 (IIHK…AVTF), 211-231 (LLAV…PILV), 285-305 (IPLG…VLTL), 311-331 (LGIH…TISA), and 349-371 (CSLF…IISV).

It belongs to the dicarboxylate/amino acid:cation symporter (DAACS) (TC 2.A.23) family.

Its subcellular location is the cell inner membrane. It carries out the reaction L-serine(in) + Na(+)(in) = L-serine(out) + Na(+)(out). It catalyses the reaction L-threonine(in) + Na(+)(in) = L-threonine(out) + Na(+)(out). In terms of biological role, involved in the import of serine and threonine into the cell, with the concomitant import of sodium (symport system). The sequence is that of Serine/threonine transporter SstT from Acinetobacter baumannii (strain ATCC 17978 / DSM 105126 / CIP 53.77 / LMG 1025 / NCDC KC755 / 5377).